The following is a 312-amino-acid chain: DnaJ homolog subfamily B member 7 (312 aa).

A J domain is found at 3–69 (DYYEVLGVQR…EKRDIYDKYG (67 aa)). Positions 272–312 (SWVTNKKEPSIFSAGFKEGGRRKKKKHKEGQKKKKSNKRNH) are disordered. The segment covering 291–312 (GRRKKKKHKEGQKKKKSNKRNH) has biased composition (basic residues).

Probably acts as a co-chaperone. This Mus musculus (Mouse) protein is DnaJ homolog subfamily B member 7 (Dnajb7).